The following is a 332-amino-acid chain: Autoinducer 2 import system permease protein LsrD (332 aa).

The next 10 helical transmembrane spans lie at 7–27, 45–65, 70–90, 91–111, 118–138, 162–182, 216–236, 240–260, 261–281, and 288–308; these read YSWE…FGLI, ICIG…GMDI, TIGL…PLPL, AIII…GLII, LVIT…LSGM, FLGI…FWLL, VYAM…SYFG, SDLG…GGAN, IYGG…VGFL, and AGVP…VVVV.

The protein belongs to the binding-protein-dependent transport system permease family. AraH/RbsC subfamily. As to quaternary structure, the complex is composed of two ATP-binding proteins (LsrA), two transmembrane proteins (LsrC and LsrD) and a solute-binding protein (LsrB).

The protein resides in the cell inner membrane. Part of the ABC transporter complex LsrABCD involved in autoinducer 2 (AI-2) import. Probably responsible for the translocation of the substrate across the membrane. This chain is Autoinducer 2 import system permease protein LsrD (lsrD), found in Salmonella typhi.